A 753-amino-acid polypeptide reads, in one-letter code: Rsm22-cox11 tandem protein 2, mitochondrial (753 aa).

The N-terminal 39 residues, methionine 1–tryptophan 39, are a transit peptide targeting the mitochondrion. [4Fe-4S] cluster-binding residues include cysteine 323, cysteine 329, cysteine 342, and cysteine 430. A helical transmembrane segment spans residues isoleucine 571 to leucine 591. At tyrosine 592–asparagine 753 the chain is on the mitochondrial intermembrane side.

In the N-terminal section; belongs to the methyltransferase superfamily. Rsm22 family. This sequence in the C-terminal section; belongs to the COX11/CtaG family. In terms of assembly, associates with the mitochondrial ribosome (mitoribosome). Only transiently interacts with the mitoribosome. Specific enzymatic cleavages in vivo by mitochondrial processing peptidase (MPP) yield mature proteins including rsm22-2 and cox11-2.

It localises to the mitochondrion. The protein localises to the mitochondrion inner membrane. In terms of biological role, mitochondrial ribosome (mitoribosome) assembly factor. Binds at the interface of the head and body domains of the mitochondrial small ribosomal subunit (mt-SSU), occluding the mRNA channel and preventing compaction of the head domain towards the body. Probable inactive methyltransferase: retains the characteristic folding and ability to bind S-adenosyl-L-methionine, but it probably lost its methyltransferase activity. Functionally, exerts its effect at some terminal stage of cytochrome c oxidase synthesis, probably by being involved in the insertion of the copper B into subunit I. The chain is Rsm22-cox11 tandem protein 2, mitochondrial (cox1102) from Schizosaccharomyces pombe (strain 972 / ATCC 24843) (Fission yeast).